Reading from the N-terminus, the 387-residue chain is Transmembrane protein 120 homolog (387 aa).

Residues Met-1 to Gln-39 are a coiled coil. Asn-111 is a glycosylation site (N-linked (GlcNAc...) asparagine). A run of 6 helical transmembrane segments spans residues Phe-130–Tyr-150, Leu-155–Leu-175, Phe-191–Ile-211, Phe-216–Leu-238, Gly-264–Trp-284, and Val-302–Val-322. A disordered region spans residues Arg-346–Thr-387. Ser-352, Ser-354, and Ser-365 each carry phosphoserine. Over residues Ser-352–Pro-381 the composition is skewed to low complexity.

The protein belongs to the TMEM120 family.

The protein resides in the membrane. This is Transmembrane protein 120 homolog from Drosophila melanogaster (Fruit fly).